A 118-amino-acid polypeptide reads, in one-letter code: Co-chaperonin GroES (118 aa).

Belongs to the GroES chaperonin family. Heptamer of 7 subunits arranged in a ring. Interacts with the chaperonin GroEL.

It is found in the cytoplasm. In terms of biological role, together with the chaperonin GroEL, plays an essential role in assisting protein folding. The GroEL-GroES system forms a nano-cage that allows encapsulation of the non-native substrate proteins and provides a physical environment optimized to promote and accelerate protein folding. GroES binds to the apical surface of the GroEL ring, thereby capping the opening of the GroEL channel. The protein is Co-chaperonin GroES of Helicobacter pylori (strain HPAG1).